An 83-amino-acid chain; its full sequence is Small integral membrane protein 22 (83 aa).

A helical membrane pass occupies residues 32–52; that stretch reads VAFIVFLTFMGTVLLLLLLVV. The tract at residues 60 to 83 is disordered; the sequence is SPGPRRESPRKERPKGVDNLALEP. Over residues 63 to 75 the composition is skewed to basic and acidic residues; the sequence is PRRESPRKERPKG.

Interacts with CANX and DDOST. Interacts with SQLE; this interaction modulates lipid droplet formation.

The protein localises to the membrane. Its subcellular location is the late endosome. Functionally, may modulate lipid droplet formation throught interaction with SQLE. The polypeptide is Small integral membrane protein 22 (Homo sapiens (Human)).